We begin with the raw amino-acid sequence, 288 residues long: Structure-specific endonuclease subunit SLX1 (288 aa).

The GIY-YIG domain occupies 7-90 (PFYGVYLLQS…QHPNMTRLIT (84 aa)).

The protein belongs to the SLX1 family. In terms of assembly, forms a heterodimer with SLX4. A divalent metal cation is required as a cofactor.

It is found in the nucleus. Its function is as follows. Catalytic subunit of the SLX1-SLX4 structure-specific endonuclease that resolves DNA secondary structures generated during DNA repair and recombination. Has endonuclease activity towards branched DNA substrates, introducing single-strand cuts in duplex DNA close to junctions with ss-DNA. The chain is Structure-specific endonuclease subunit SLX1 from Yarrowia lipolytica (strain CLIB 122 / E 150) (Yeast).